The following is a 123-amino-acid chain: Ribosome-binding factor A (123 aa).

Belongs to the RbfA family. In terms of assembly, monomer. Binds 30S ribosomal subunits, but not 50S ribosomal subunits or 70S ribosomes.

The protein localises to the cytoplasm. In terms of biological role, one of several proteins that assist in the late maturation steps of the functional core of the 30S ribosomal subunit. Associates with free 30S ribosomal subunits (but not with 30S subunits that are part of 70S ribosomes or polysomes). Required for efficient processing of 16S rRNA. May interact with the 5'-terminal helix region of 16S rRNA. The protein is Ribosome-binding factor A of Solibacter usitatus (strain Ellin6076).